A 684-amino-acid polypeptide reads, in one-letter code: Phenoloxidase 2 (684 aa).

Residues 1 to 51 (MSNTAVLNDLVALYDRPTEPMFRVKAKKSFKVPKEYVTDRFKNVAVEISNR) constitute a propeptide, removed by PPAF1. Asparagine 81 and asparagine 91 each carry an N-linked (GlcNAc...) asparagine glycan. Residues histidine 209, histidine 213, and histidine 238 each contribute to the Cu cation site. Asparagine 330 carries an N-linked (GlcNAc...) asparagine glycan. Glutamate 350 acts as the Proton acceptor in catalysis. Cu cation-binding residues include histidine 365, histidine 369, and histidine 405. Asparagine 416, asparagine 487, asparagine 491, and asparagine 546 each carry an N-linked (GlcNAc...) asparagine glycan. Disulfide bonds link cysteine 581–cysteine 623 and cysteine 583–cysteine 630.

This sequence belongs to the tyrosinase family. As to quaternary structure, dimer. Might form a homodimer or a heterodimer with PPO1. Might interact with PPAF2 (via CLIP domain); the interaction might be required for PPO2 activity. It depends on Cu(2+) as a cofactor. In terms of processing, precursor cleaved by PPAF1. In terms of tissue distribution, hemocytes.

It localises to the secreted. Its function is as follows. This is a copper-containing oxidase that functions in the formation of pigments such as melanins and other polyphenolic compounds. Catalyzes the oxidation of o-diphenols (N-acetyldopamine, 4-methylcatechol and dopamine). Cannot oxidize monophenols and p-phenols (L-tyrosine, tyramine, gentisic acid and hydroquinone). Binds to the surface of hemocytes and is involved in hemocyte melanization. Activation of the enzyme in response to bacterial lipopolysaccharides (LPS) suggests it may play a role in innate immunity. In Holotrichia diomphalia (Korean black chafer), this protein is Phenoloxidase 2.